A 336-amino-acid chain; its full sequence is Phenylalanine--tRNA ligase alpha subunit (336 aa).

E259 contributes to the Mg(2+) binding site.

It belongs to the class-II aminoacyl-tRNA synthetase family. Phe-tRNA synthetase alpha subunit type 1 subfamily. In terms of assembly, tetramer of two alpha and two beta subunits. Mg(2+) is required as a cofactor.

It localises to the cytoplasm. The enzyme catalyses tRNA(Phe) + L-phenylalanine + ATP = L-phenylalanyl-tRNA(Phe) + AMP + diphosphate + H(+). This Tropheryma whipplei (strain TW08/27) (Whipple's bacillus) protein is Phenylalanine--tRNA ligase alpha subunit.